The primary structure comprises 61 residues: Photosystem II reaction center protein K (61 aa).

Positions 1 to 24 (MPNILSLTCICFNSVLYPTSFFFA) are excised as a propeptide. A helical membrane pass occupies residues 32–52 (IFNPIVDIMPVIPLFFFLLAF).

The protein belongs to the PsbK family. PSII is composed of 1 copy each of membrane proteins PsbA, PsbB, PsbC, PsbD, PsbE, PsbF, PsbH, PsbI, PsbJ, PsbK, PsbL, PsbM, PsbT, PsbX, PsbY, PsbZ, Psb30/Ycf12, at least 3 peripheral proteins of the oxygen-evolving complex and a large number of cofactors. It forms dimeric complexes. Detected in both etioplasts and green leaves; PSII is only assembled in green leaves.

It localises to the plastid. It is found in the chloroplast thylakoid membrane. Its function is as follows. One of the components of the core complex of photosystem II (PSII). PSII is a light-driven water:plastoquinone oxidoreductase that uses light energy to abstract electrons from H(2)O, generating O(2) and a proton gradient subsequently used for ATP formation. It consists of a core antenna complex that captures photons, and an electron transfer chain that converts photonic excitation into a charge separation. The polypeptide is Photosystem II reaction center protein K (Hordeum vulgare (Barley)).